We begin with the raw amino-acid sequence, 196 residues long: Small ribosomal subunit protein uS4c (196 aa).

The disordered stretch occupies residues 17–36 (ALPGLTRKTPKSGSNLKKKF). Residues 89 to 169 (MRLDNILFRL…LPKHLTIDTL (81 aa)) form the S4 RNA-binding domain.

This sequence belongs to the universal ribosomal protein uS4 family. In terms of assembly, part of the 30S ribosomal subunit. Contacts protein S5. The interaction surface between S4 and S5 is involved in control of translational fidelity.

The protein localises to the plastid. Its subcellular location is the chloroplast. Its function is as follows. One of the primary rRNA binding proteins, it binds directly to 16S rRNA where it nucleates assembly of the body of the 30S subunit. With S5 and S12 plays an important role in translational accuracy. The protein is Small ribosomal subunit protein uS4c (rps4) of Festuca gigantea (Giant fescue).